The chain runs to 130 residues: Protein ApaG (130 aa).

Residues Ser-3–Ser-127 form the ApaG domain.

The sequence is that of Protein ApaG from Rhodospirillum centenum (strain ATCC 51521 / SW).